A 504-amino-acid polypeptide reads, in one-letter code: UDP-glycosyltransferase UGT4 (504 aa).

A signal peptide spans 1–23 (MTLLRDLLLLYINSLLFINPSIG). Residues 24–474 (ENILVFLPTK…SAVIDLYWFQ (451 aa)) lie on the Lumenal side of the membrane. 4 N-linked (GlcNAc...) asparagine glycosylation sites follow: asparagine 54, asparagine 66, asparagine 69, and asparagine 422. A helical transmembrane segment spans residues 475–495 (YILLDIILFYSLIVLILLCIL). The Cytoplasmic segment spans residues 496 to 504 (RIFFRMLTK).

It belongs to the UDP-glycosyltransferase family.

The protein localises to the microsome membrane. Its function is as follows. Catalyzes the transfer of a glycosyl group from a UDP-sugar to an acceptor molecule. The protein is UDP-glycosyltransferase UGT4 of Dactylopius coccus (Cochineal).